The chain runs to 523 residues: Calcium-dependent protein kinase 28 (523 aa).

Glycine 2 carries the N-myristoyl glycine lipid modification. Residue cysteine 4 is the site of S-palmitoyl cysteine attachment. The interval 15–43 (SSRRSSQTKSKAAPTPIDTKASTKRRTGS) is disordered. The Protein kinase domain occupies 62-322 (YTIGKLLGHG…AAQALSHAWV (261 aa)). Residues 68-76 (LGHGQFGYT) and lysine 91 each bind ATP. Aspartate 188 (proton acceptor) is an active-site residue. Phosphoserine occurs at positions 228 and 318. The interval 328–358 (ATDIPVDISVLNNLRQFVRYSRLKQFALRAL) is autoinhibitory domain. 4 consecutive EF-hand domains span residues 365–400 (AEIS…DLPW), 402–437 (LKDS…VHQL), 444–479 (KWQL…RGSI), and 482–509 (LLDE…ASIS). Ca(2+)-binding residues include aspartate 378, aspartate 380, asparagine 382, glutamate 389, aspartate 415, asparagine 417, aspartate 419, glutamate 426, aspartate 457, aspartate 459, aspartate 461, tyrosine 463, glutamate 468, aspartate 487, aspartate 489, aspartate 491, and lysine 493. Serine 495 is modified (phosphoserine). Glutamate 498 contacts Ca(2+). Serine 515 carries the phosphoserine modification.

Belongs to the protein kinase superfamily. Ser/Thr protein kinase family. CDPK subfamily. In terms of assembly, interacts with BIK1. As to expression, expressed in vascular and meristematic tissues throughout plant development.

It localises to the cell membrane. The enzyme catalyses L-seryl-[protein] + ATP = O-phospho-L-seryl-[protein] + ADP + H(+). It catalyses the reaction L-threonyl-[protein] + ATP = O-phospho-L-threonyl-[protein] + ADP + H(+). With respect to regulation, activated by calcium. Autophosphorylation plays an important role in the regulation of the kinase activity. May play a role in signal transduction pathways that involve calcium as a second messenger. Acts as a developmentally controlled regulator for coordinated stem elongation and vascular development. Acts as a key component which contributes to the developmental switch that establishes the transition from vegetative to reproductive growth. Involved in pathogen-associated molecular pattern (PAMP)-triggered immunity (PTI) signaling. Interacts with and phosphorylates the kinase BIK1, a central rate-limiting kinase in PTI signaling. Facilitates BIK1 turnover and negatively regulates BIK1-mediated immune responses triggered by several PAMPs. Its kinase activity is necessary and sufficient for its function in PTI signaling. This chain is Calcium-dependent protein kinase 28, found in Arabidopsis thaliana (Mouse-ear cress).